A 37-amino-acid chain; its full sequence is Esculentin-2JDb (37 aa).

C31 and C37 form a disulfide bridge.

In terms of tissue distribution, expressed by the skin glands.

The protein resides in the secreted. In terms of biological role, has antibacterial activity against E.coli and S.aureus strains. The polypeptide is Esculentin-2JDb (Odorrana jingdongensis (Jingdong frog)).